The following is a 154-amino-acid chain: SsrA-binding protein (154 aa).

The protein belongs to the SmpB family.

Its subcellular location is the cytoplasm. Its function is as follows. Required for rescue of stalled ribosomes mediated by trans-translation. Binds to transfer-messenger RNA (tmRNA), required for stable association of tmRNA with ribosomes. tmRNA and SmpB together mimic tRNA shape, replacing the anticodon stem-loop with SmpB. tmRNA is encoded by the ssrA gene; the 2 termini fold to resemble tRNA(Ala) and it encodes a 'tag peptide', a short internal open reading frame. During trans-translation Ala-aminoacylated tmRNA acts like a tRNA, entering the A-site of stalled ribosomes, displacing the stalled mRNA. The ribosome then switches to translate the ORF on the tmRNA; the nascent peptide is terminated with the 'tag peptide' encoded by the tmRNA and targeted for degradation. The ribosome is freed to recommence translation, which seems to be the essential function of trans-translation. This is SsrA-binding protein from Acetivibrio thermocellus (strain ATCC 27405 / DSM 1237 / JCM 9322 / NBRC 103400 / NCIMB 10682 / NRRL B-4536 / VPI 7372) (Clostridium thermocellum).